A 466-amino-acid polypeptide reads, in one-letter code: Neuronal acetylcholine receptor subunit non-alpha-3 (466 aa).

The first 28 residues, 1–28 (MKLQISGLLLVTAVAYATIEAPEEFVSL), serve as a signal peptide directing secretion. The Extracellular portion of the chain corresponds to 29 to 235 (AEMEDTLLRN…VTYSFILKRL (207 aa)). 4 N-linked (GlcNAc...) asparagine glycosylation sites follow: Asn54, Asn141, Asn169, and Asn208. An intrachain disulfide couples Cys156 to Cys170. 3 consecutive transmembrane segments (helical) span residues 236–260 (PLFY…VFYL), 268–285 (LLLS…LLVI), and 302–323 (YLLF…VINV). Topologically, residues 324–438 (HHRSSATYHP…WKFVAQVLDR (115 aa)) are cytoplasmic. A helical membrane pass occupies residues 439 to 456 (IFLWVFLTASVLGTILIF).

It belongs to the ligand-gated ion channel (TC 1.A.9) family. Acetylcholine receptor (TC 1.A.9.1) subfamily. Neuronal AChR seems to be composed of two different type of subunits: alpha and non-alpha (beta). Retina, tectum and brain.

It is found in the postsynaptic cell membrane. It localises to the cell membrane. Functionally, after binding acetylcholine, the AChR responds by an extensive change in conformation that affects all subunits and leads to opening of an ion-conducting channel across the plasma membrane. This Carassius auratus (Goldfish) protein is Neuronal acetylcholine receptor subunit non-alpha-3.